The chain runs to 160 residues: Inner membrane protein YcdZ (160 aa).

The next 5 membrane-spanning stretches (helical) occupy residues 20–42 (WGAVSLGLLSWAGFLGCTAYFAC), 50–70 (LLISACTLLSGMVWALVIIHG), 72–92 (ALAPHLEIVSYVLTGIVAFLM), 99–119 (LLLSFVPGTFIGACATFAGQG), and 123–143 (LVLPSLALGLIFGYAMKNSGL).

This sequence to E.coli YahC.

The protein localises to the cell inner membrane. This chain is Inner membrane protein YcdZ (ycdZ), found in Salmonella typhimurium (strain LT2 / SGSC1412 / ATCC 700720).